The following is a 524-amino-acid chain: Na(+)/H(+) antiporter NhaB (524 aa).

9 helical membrane-spanning segments follow: residues 25 to 45 (IIAF…IAGW), 97 to 117 (LLLV…MFLF), 135 to 155 (IFAS…AVII), 234 to 254 (FVEF…FGLL), 302 to 322 (ALIG…VGLI), 352 to 372 (FTAL…QGLF), 388 to 408 (MVMF…VFVG), 445 to 465 (VATP…IAPL), and 474 to 494 (VMMA…ATYI).

Belongs to the NhaB Na(+)/H(+) (TC 2.A.34) antiporter family.

The protein localises to the cell inner membrane. It carries out the reaction 2 Na(+)(in) + 3 H(+)(out) = 2 Na(+)(out) + 3 H(+)(in). In terms of biological role, na(+)/H(+) antiporter that extrudes sodium in exchange for external protons. In Alteromonas mediterranea (strain DSM 17117 / CIP 110805 / LMG 28347 / Deep ecotype), this protein is Na(+)/H(+) antiporter NhaB.